The sequence spans 357 residues: MSLENFGNFLTLDEKHSFIKKYFKEFYTKDFKLFASKDKHYRTRAELSFYHENDTLFYAMFDPKSKKKYIIEYLDFADEKICAFMPRLLEYLRQDNKLKEKLFGVEFLTTKQELSITLLYHKNIEDIKSNLENLSNILHINLIARSKGKKLIFKTENLRQTLNIQDRKIFYEFNNDCFIQPNTAINEKMITWVCEILNTQKRMDLLELYCGYGNFTLALAPFFFKILATEISKSNINFALKNCELNNTTNIHFARLSSEELSLAIKKEREFFRLKDIRLDDFNFSHVLVDPPRAGLDKSVIDLIKKYGNIIYISCNPMTLKENLKELSLTHRVEEFALFDQFVNTPHLECGVFLSKV.

S-adenosyl-L-methionine is bound by residues Gln-180, Tyr-209, Asn-214, Glu-230, and Asp-290. Residue Cys-315 is the Nucleophile of the active site. The active-site Proton acceptor is Glu-349.

The protein belongs to the class I-like SAM-binding methyltransferase superfamily. RNA M5U methyltransferase family. TrmA subfamily.

The enzyme catalyses uridine(54) in tRNA + S-adenosyl-L-methionine = 5-methyluridine(54) in tRNA + S-adenosyl-L-homocysteine + H(+). It catalyses the reaction uridine(341) in tmRNA + S-adenosyl-L-methionine = 5-methyluridine(341) in tmRNA + S-adenosyl-L-homocysteine + H(+). Dual-specificity methyltransferase that catalyzes the formation of 5-methyluridine at position 54 (m5U54) in all tRNAs, and that of position 341 (m5U341) in tmRNA (transfer-mRNA). The chain is tRNA/tmRNA (uracil-C(5))-methyltransferase from Campylobacter jejuni subsp. jejuni serotype O:2 (strain ATCC 700819 / NCTC 11168).